The sequence spans 409 residues: MADYLRQVMPENDSDSEALPRKSEQASLAWAEYTANFEMGLESSKLKNNKNMPEAFLLPNGYPDYLRLILTSRVYDVVTETPLTPVVNISNRLGCKVLLKREDLQPVFSFKLRGAYNKMAHLDPRDCWRGVVTYSTGNHAQGVAYSARKLRIPATIVMPSGTPDIMHMNVSRLGGSVILHGADLDTAKAEAERLEKIYNLISIPPLDDPYVIAGHGTIGMELLHQISSKNLEAVFCCAGEGSLIAGIGIYLKRIAPHVNIIGVEMHNPKATVKSLEGVKYTTLKDAGLFARCATVKTAGRESYRIFQEVVSEVIEVTMDETFGATKDIFEDTRAIIEPAGALVLAGLKKWVSQNPSVNQDRCLVAIASGANVDFDHLRLITERASIAENKGGLHEINGVSRNEEPYLLS.

The interval 1 to 21 (MADYLRQVMPENDSDSEALPR) is disordered. The residue at position 111 (lysine 111) is an N6-(pyridoxal phosphate)lysine. Residues asparagine 138, 239–243 (GEGSL), and serine 368 each bind pyridoxal 5'-phosphate.

Belongs to the serine/threonine dehydratase family. The cofactor is pyridoxal 5'-phosphate.

The protein operates within mycotoxin biosynthesis. Functionally, threonine dehydratase-like protein; part of the gene clusters that mediate the biosynthesis of the host-selective toxins (HSTs) AK-toxins responsible for Japanese pear black spot disease by the Japanese pear pathotype. AK-toxins are esters of 9,10-epoxy 8-hydroxy 9-methyldecatrienoic acid (EDA). On cellular level, AK-toxins affect plasma membrane of susceptible cells and cause a sudden increase in loss of K(+) after a few minutes of toxin treatment. The acyl-CoA ligase AKT1, the hydrolase AKT2 and enoyl-CoA hydratase AKT3 are all involved in the biosynthesis of the AK-, AF- and ACT-toxin common 9,10-epoxy-8-hydroxy-9-methyl-decatrienoic acid (EDA) structural moiety. Part of the EDA biosynthesis occurs in the peroxisome since these 3 enzymes are localized in peroxisomes. The exact roles of the 3 enzymes, as well as of additional AK-toxin clusters enzymes, including AKT4, AKT6 and AKTS1, have still to be elucidated. The Cytochrome P450 monooxygenase AKT7 on the other side functions to limit production of EDA and AK-toxin, probably via the catalysis of a side reaction of EDA or its precursor. The protein is Threonine dehydratase-like protein AKTS1-1 of Alternaria alternata (Alternaria rot fungus).